The following is a 129-amino-acid chain: Large ribosomal subunit protein bL17 (129 aa).

This sequence belongs to the bacterial ribosomal protein bL17 family. In terms of assembly, part of the 50S ribosomal subunit. Contacts protein L32.

This is Large ribosomal subunit protein bL17 from Yersinia enterocolitica serotype O:8 / biotype 1B (strain NCTC 13174 / 8081).